Consider the following 640-residue polypeptide: Biosynthetic arginine decarboxylase (640 aa).

Residue lysine 105 is modified to N6-(pyridoxal phosphate)lysine. Position 290–300 (phenylalanine 290–tyrosine 300) interacts with substrate.

Belongs to the Orn/Lys/Arg decarboxylase class-II family. SpeA subfamily. Requires Mg(2+) as cofactor. Pyridoxal 5'-phosphate is required as a cofactor.

It catalyses the reaction L-arginine + H(+) = agmatine + CO2. Its function is as follows. Catalyzes the biosynthesis of agmatine from arginine. The polypeptide is Biosynthetic arginine decarboxylase (Vibrio cholerae serotype O1 (strain ATCC 39315 / El Tor Inaba N16961)).